Reading from the N-terminus, the 373-residue chain is Alcohol dehydrogenase 2 (373 aa).

The Zn(2+) site is built by Cys47, Thr49, His69, Cys99, Cys102, Cys105, Cys113, and Cys177. 2 residues coordinate an alcohol: Thr49 and His69. Thr49 serves as a coordination point for NAD(+). Residues Gly202–Gly207, Asp226, Lys231, Thr272, Phe316, and Arg366 contribute to the NAD(+) site.

This sequence belongs to the zinc-containing alcohol dehydrogenase family. Homodimer. Zn(2+) is required as a cofactor.

It is found in the cytoplasm. It carries out the reaction a primary alcohol + NAD(+) = an aldehyde + NADH + H(+). The enzyme catalyses a secondary alcohol + NAD(+) = a ketone + NADH + H(+). In Hordeum vulgare (Barley), this protein is Alcohol dehydrogenase 2 (ADH2).